The sequence spans 289 residues: Acetyl-coenzyme A carboxylase carboxyl transferase subunit beta (289 aa).

Positions 34–289 constitute a CoA carboxyltransferase N-terminal domain; sequence MWVKCNKCGE…KLINMHQNSF (256 aa). Zn(2+) contacts are provided by Cys-38, Cys-41, Cys-57, and Cys-60. Residues 38-60 form a C4-type zinc finger; it reads CNKCGEILYQNDLEKNYMVCNLC.

This sequence belongs to the AccD/PCCB family. In terms of assembly, acetyl-CoA carboxylase is a heterohexamer composed of biotin carboxyl carrier protein (AccB), biotin carboxylase (AccC) and two subunits each of ACCase subunit alpha (AccA) and ACCase subunit beta (AccD). The cofactor is Zn(2+).

The protein localises to the cytoplasm. The catalysed reaction is N(6)-carboxybiotinyl-L-lysyl-[protein] + acetyl-CoA = N(6)-biotinyl-L-lysyl-[protein] + malonyl-CoA. Its pathway is lipid metabolism; malonyl-CoA biosynthesis; malonyl-CoA from acetyl-CoA: step 1/1. Its function is as follows. Component of the acetyl coenzyme A carboxylase (ACC) complex. Biotin carboxylase (BC) catalyzes the carboxylation of biotin on its carrier protein (BCCP) and then the CO(2) group is transferred by the transcarboxylase to acetyl-CoA to form malonyl-CoA. In Clostridium botulinum (strain Kyoto / Type A2), this protein is Acetyl-coenzyme A carboxylase carboxyl transferase subunit beta.